A 689-amino-acid chain; its full sequence is Glycine--tRNA ligase beta subunit (689 aa).

This sequence belongs to the class-II aminoacyl-tRNA synthetase family. As to quaternary structure, tetramer of two alpha and two beta subunits.

The protein localises to the cytoplasm. It carries out the reaction tRNA(Gly) + glycine + ATP = glycyl-tRNA(Gly) + AMP + diphosphate. The protein is Glycine--tRNA ligase beta subunit of Salmonella typhi.